We begin with the raw amino-acid sequence, 193 residues long: Ion-translocating oxidoreductase complex subunit A (193 aa).

6 helical membrane passes run 4–24 (LLLI…RFLG), 39–59 (LGMG…TWVL), 72–92 (LQTI…EMIV), 102–122 (SLGI…LAVL), 134–154 (LVFA…FAGL), and 171–191 (PIEL…AGLV).

The protein belongs to the NqrDE/RnfAE family. As to quaternary structure, the complex is composed of six subunits: RnfA, RnfB, RnfC, RnfD, RnfE and RnfG.

It is found in the cell inner membrane. Functionally, part of a membrane-bound complex that couples electron transfer with translocation of ions across the membrane. The polypeptide is Ion-translocating oxidoreductase complex subunit A (Syntrophotalea carbinolica (strain DSM 2380 / NBRC 103641 / GraBd1) (Pelobacter carbinolicus)).